The sequence spans 97 residues: Nucleoid-associated protein HP_0035 (97 aa).

Belongs to the YbaB/EbfC family. As to quaternary structure, homodimer.

The protein localises to the cytoplasm. It localises to the nucleoid. In terms of biological role, binds to DNA and alters its conformation. May be involved in regulation of gene expression, nucleoid organization and DNA protection. The polypeptide is Nucleoid-associated protein HP_0035 (Helicobacter pylori (strain ATCC 700392 / 26695) (Campylobacter pylori)).